A 930-amino-acid chain; its full sequence is Isoleucine--tRNA ligase (930 aa).

A 'HIGH' region motif is present at residues proline 57–histidine 67. Glutamate 554 lines the L-isoleucyl-5'-AMP pocket. The 'KMSKS' region motif lies at lysine 595 to serine 599. Residue lysine 598 participates in ATP binding. Residues cysteine 888, cysteine 891, cysteine 908, and cysteine 911 each coordinate Zn(2+).

Belongs to the class-I aminoacyl-tRNA synthetase family. IleS type 1 subfamily. Monomer. The cofactor is Zn(2+).

The protein localises to the cytoplasm. The catalysed reaction is tRNA(Ile) + L-isoleucine + ATP = L-isoleucyl-tRNA(Ile) + AMP + diphosphate. Its function is as follows. Catalyzes the attachment of isoleucine to tRNA(Ile). As IleRS can inadvertently accommodate and process structurally similar amino acids such as valine, to avoid such errors it has two additional distinct tRNA(Ile)-dependent editing activities. One activity is designated as 'pretransfer' editing and involves the hydrolysis of activated Val-AMP. The other activity is designated 'posttransfer' editing and involves deacylation of mischarged Val-tRNA(Ile). The chain is Isoleucine--tRNA ligase from Streptococcus pneumoniae (strain ATCC 700669 / Spain 23F-1).